Reading from the N-terminus, the 1070-residue chain is DNA double-strand break repair Rad50 ATPase (1070 aa).

ATP contacts are provided by residues Arg12, 32 to 38, and Gln142; that span reads NGSGKSS. Coiled coils occupy residues 227-257, 369-403, and 449-478; these read LEEL…RLQE, ECRT…EKAG, and LREL…KEIR. Residues 508 to 607 form the Zinc-hook domain; that stretch reads LENLEDFNEL…KLNRLKEAKK (100 aa). Zn(2+)-binding residues include Cys555 and Cys558. 2 coiled-coil regions span residues 570 to 614 and 878 to 908; these read TAEE…QAYD and LKRL…ADEL. 969–974 provides a ligand contact to ATP; it reads LLSGGE.

The protein belongs to the SMC family. RAD50 subfamily. As to quaternary structure, homodimer. Forms a heterotetramer composed of two Mre11 subunits and two Rad50 subunits. Requires Zn(2+) as cofactor.

Part of the Rad50/Mre11 complex, which is involved in the early steps of DNA double-strand break (DSB) repair. The complex may facilitate opening of the processed DNA ends to aid in the recruitment of HerA and NurA. Rad50 controls the balance between DNA end bridging and DNA resection via ATP-dependent structural rearrangements of the Rad50/Mre11 complex. In Methanosarcina mazei (strain ATCC BAA-159 / DSM 3647 / Goe1 / Go1 / JCM 11833 / OCM 88) (Methanosarcina frisia), this protein is DNA double-strand break repair Rad50 ATPase.